The sequence spans 352 residues: Thiamine-phosphate synthase (352 aa).

The unknown stretch occupies residues 1–128; sequence MNPTPSETSL…AAEAAAIRYG (128 aa). The disordered stretch occupies residues 63–85; that stretch reads SYKQARSTSTDTGAGLKHPAQLD. Positions 129–352 are thiamine-phosphate synthase; the sequence is LYDLEVTCLN…LLQQLDQATI (224 aa). 4-amino-2-methyl-5-(diphosphooxymethyl)pyrimidine is bound by residues 180 to 184 and asparagine 212; that span reads QYRCK. Positions 213 and 232 each coordinate Mg(2+). The 4-amino-2-methyl-5-(diphosphooxymethyl)pyrimidine site is built by serine 251 and lysine 280. Residue glycine 307 participates in 2-[(2R,5Z)-2-carboxy-4-methylthiazol-5(2H)-ylidene]ethyl phosphate binding.

Belongs to the thiamine-phosphate synthase family. Mg(2+) is required as a cofactor.

It catalyses the reaction 2-[(2R,5Z)-2-carboxy-4-methylthiazol-5(2H)-ylidene]ethyl phosphate + 4-amino-2-methyl-5-(diphosphooxymethyl)pyrimidine + 2 H(+) = thiamine phosphate + CO2 + diphosphate. It carries out the reaction 2-(2-carboxy-4-methylthiazol-5-yl)ethyl phosphate + 4-amino-2-methyl-5-(diphosphooxymethyl)pyrimidine + 2 H(+) = thiamine phosphate + CO2 + diphosphate. The enzyme catalyses 4-methyl-5-(2-phosphooxyethyl)-thiazole + 4-amino-2-methyl-5-(diphosphooxymethyl)pyrimidine + H(+) = thiamine phosphate + diphosphate. The protein operates within cofactor biosynthesis; thiamine diphosphate biosynthesis; thiamine phosphate from 4-amino-2-methyl-5-diphosphomethylpyrimidine and 4-methyl-5-(2-phosphoethyl)-thiazole: step 1/1. Condenses 4-methyl-5-(beta-hydroxyethyl)thiazole monophosphate (THZ-P) and 2-methyl-4-amino-5-hydroxymethyl pyrimidine pyrophosphate (HMP-PP) to form thiamine monophosphate (TMP). This chain is Thiamine-phosphate synthase, found in Synechococcus sp. (strain CC9605).